A 305-amino-acid chain; its full sequence is Myb-like transcriptional regulator basR (305 aa).

Myb-like domains are found at residues 5 to 59 (RRRW…YNRF), 60 to 110 (TGGL…HHCL), and 111 to 162 (NPEL…TILS). Positions 175-215 (PCCDSPSPSKSSRRPPSTPTSTPQVPGSRQGSSYDPYDYGS) are disordered. Residues 198–207 (QVPGSRQGSS) show a composition bias toward polar residues.

It localises to the nucleus. Its function is as follows. Transcription regulator that acts as a central regulatory node for the integration of external bacterial signals leading to the regulation of secondary metabolite gene clusters such as orsellinic, lecanoric acid, cichorine, 2,4-dihydroxy-3-methyl-6-(2-oxopropyl)benzaldehyde (dba), emericellamide or microperfuranone clusters. In Emericella nidulans (strain FGSC A4 / ATCC 38163 / CBS 112.46 / NRRL 194 / M139) (Aspergillus nidulans), this protein is Myb-like transcriptional regulator basR.